Reading from the N-terminus, the 374-residue chain is MSDKTQNTKPVAELNVEQVKEALIEEGKKKGILTYAKIAARLAPFTLDSDQMDEYLEHVGEAGIEVSDDADDEDPDETELVKEETESFDLTDMSVPPGVKINDPVRMYLKEIGRVDLLTADEEIALAKRIEAGDIEAKGRLAEANLRLVVSIAKRYVGRGMLFLDLIQEGNMGLMKAVEKFDFNKGFKFSTYATWWIRQAITRAIADQARTIRIPVHMVETINKLIRVQRSLLQDLGRDPSPEEIGEEMDLPTEKVREILKIAQEPVSLETPIGEEDDSHLGDFIEDQDATSPSDHAAYELLKEQLEDVLDTLTDREENVLRLRFGLDDGRTRTLEEVGRVFGVTRERIRQIEAKALRKLRHPSRSKQLKDFLE.

The interval 141-211 (LAEANLRLVV…TRAIADQART (71 aa)) is sigma-70 factor domain-2. Residues 165-168 (DLIQ) carry the Interaction with polymerase core subunit RpoC motif. A sigma-70 factor domain-3 region spans residues 220-296 (ETINKLIRVQ…DQDATSPSDH (77 aa)). The segment at 309-362 (VLDTLTDREENVLRLRFGLDDGRTRTLEEVGRVFGVTRERIRQIEAKALRKLRH) is sigma-70 factor domain-4. The H-T-H motif DNA-binding region spans 335 to 354 (LEEVGRVFGVTRERIRQIEA).

Belongs to the sigma-70 factor family. RpoD/SigA subfamily. Interacts transiently with the RNA polymerase catalytic core.

The protein localises to the cytoplasm. Its function is as follows. Sigma factors are initiation factors that promote the attachment of RNA polymerase to specific initiation sites and are then released. This sigma factor is the primary sigma factor during exponential growth. The polypeptide is RNA polymerase sigma factor SigA (Listeria innocua serovar 6a (strain ATCC BAA-680 / CLIP 11262)).